The primary structure comprises 674 residues: Primary amine oxidase (674 aa).

The N-terminal stretch at 1–25 (MASTTTMRLALFSVLTLLSFHAVVS) is a signal peptide. The N-linked (GlcNAc...) asparagine glycan is linked to Asn156. Residues Cys162 and Cys183 are joined by a disulfide bond. The segment covering 226 to 236 (ENTEYQVSKQS) has biased composition (polar residues). The disordered stretch occupies residues 226 to 251 (ENTEYQVSKQSPPFGPKQHSLTSHQP). 323-334 (FFDSGEFGFGLS) is a substrate binding site. Asp325 acts as the Proton acceptor in catalysis. The cysteines at positions 344 and 370 are disulfide-linked. Asn389 is a glycosylation site (N-linked (GlcNAc...) asparagine). Position 409-414 (409-414 (VGNYDN)) interacts with substrate. Residue Tyr412 is the Schiff-base intermediate with substrate; via topaquinone of the active site. Residue Tyr412 is modified to 2',4',5'-topaquinone. Cu cation is bound by residues His467 and His469. Mn(2+)-binding residues include Asp476, Phe477, Asp478, Asp617, and Ile618. Residue His628 participates in Cu cation binding.

The protein belongs to the copper/topaquinone oxidase family. As to quaternary structure, homodimer. The cofactor is Cu cation. Mn(2+) serves as cofactor. Requires L-topaquinone as cofactor. Topaquinone (TPQ) is generated by copper-dependent autoxidation of a specific tyrosyl residue.

The enzyme catalyses a primary methyl amine + O2 + H2O = an aldehyde + H2O2 + NH4(+). The protein is Primary amine oxidase of Pisum sativum (Garden pea).